Consider the following 922-residue polypeptide: NEDD4-like E3 ubiquitin-protein ligase WWP1 (922 aa).

A C2 domain is found at 1 to 116; it reads MATASPRSDT…IHNRKLERVK (116 aa). 5 stretches are compositionally biased toward polar residues: residues 210–219, 243–278, 286–302, 314–323, and 340–351; these read GDNTPSSPSQ, NGES…STTV, ILTS…TSAE, DTSNSRSSSA, and RQQSGNANTETL. Residues 210–388 form a disordered region; sequence GDNTPSSPSQ…RPQPLPPGWE (179 aa). WW domains follow at residues 349–382, 381–414, 456–489, and 496–529; these read ETLP…RPQP, QPLP…RPTM, GPLP…DPRT, and EPLP…DPRN. The tract at residues 349 to 531 is required for interaction with and ubiquitination of AMOTL2. Required for interaction with YAP1; the sequence is ETLPSGWEQR…TTFKDPRNGK (183 aa). One can recognise an HECT domain in the interval 588–922; the sequence is KPYDLRRRLY…IEETEGFGQE (335 aa). Catalysis depends on Cys-890, which acts as the Glycyl thioester intermediate.

In terms of assembly, interacts with the Crumbs complex components PALS1 and PATJ; interaction with the Crumbs complex is enhanced by WWP1's interaction with AMOTL2 and facilitates WWP1 localization to the plasma membrane. Interaction with the Crumbs complex promotes WWP1 monoubiquitination of AMOTL2, which activates the Hippo signaling pathway. Binds KLF2 and HIVEP3. Binds SCNN1A, SCNN1B, SCNN1G, WBP1, WBP2, DRPLA and adenovirus type 2 PIII. Interacts with RNF11. Interacts with SPART. Interacts with ERBB4 isoforms JM-B CYT-1 and JM-A CYT-1. Interacts with SMAD1, SMAD2, SMAD3, SMAD5, SMAD6, SMAD7, TGFBR1 and TGFBR2. Associates with the TGFBR1:TGFBR2 receptor complex in presence of SMAD7. Interacts with SKIL isoform 1. Interacts with TP63 isoform 1 and isoform 2. Interacts with STAMBP and RNF11. Interacts with NDFIP1 and NDFIP2; this interaction activates the E3 ubiquitin-protein ligase. Interacts with TGIF. Interacts (via WW domains) with ARRDC1, ARRDC2 and ARRDC3. As to quaternary structure, (Microbial infection) Interacts with HTLV-1 protein Gag. (Microbial infection) Interacts with ebola virus protein VP40. Auto-ubiquitinated and ubiquitinated by RNF11. As to expression, detected in heart, placenta, pancreas, kidney, liver, skeletal muscle, bone marrow, fetal brain, and at much lower levels in adult brain and lung. Isoform 1 and isoform 5 predominate in all tissues tested, except in testis and bone marrow, where isoform 5 is expressed at much higher levels than isoform 1.

Its subcellular location is the cytoplasm. The protein localises to the cell membrane. It is found in the nucleus. The protein resides in the cell junction. It catalyses the reaction S-ubiquitinyl-[E2 ubiquitin-conjugating enzyme]-L-cysteine + [acceptor protein]-L-lysine = [E2 ubiquitin-conjugating enzyme]-L-cysteine + N(6)-ubiquitinyl-[acceptor protein]-L-lysine.. The protein operates within protein modification; protein ubiquitination. Its activity is regulated as follows. Activated by NDFIP1- and NDFIP2-binding. Functionally, E3 ubiquitin-protein ligase which accepts ubiquitin from an E2 ubiquitin-conjugating enzyme in the form of a thioester and then directly transfers the ubiquitin to targeted substrates. Ubiquitinates ERBB4 isoforms JM-A CYT-1 and JM-B CYT-1, KLF2, KLF5 and TP63 and promotes their proteasomal degradation. Ubiquitinates RNF11 without targeting it for degradation. Ubiquitinates and promotes degradation of TGFBR1; the ubiquitination is enhanced by SMAD7. Ubiquitinates SMAD6 and SMAD7. Ubiquitinates and promotes degradation of SMAD2 in response to TGF-beta signaling, which requires interaction with TGIF. Activates the Hippo signaling pathway in response to cell contact inhibition and recruitment to the Crumbs complex at the cell membrane. Monoubiquitinates AMOTL2 which facilitates its interaction with and activation of LATS2. LATS2 then phosphorylates YAP1, excluding it from the nucleus and therefore ultimately represses YAP1-driven transcription of target genes. The polypeptide is NEDD4-like E3 ubiquitin-protein ligase WWP1 (WWP1) (Homo sapiens (Human)).